The following is a 404-amino-acid chain: cAMP-dependent protein kinase regulatory subunit (404 aa).

The dimerization and phosphorylation stretch occupies residues 14-144 (LTDHELLRIP…RLKTAIAGNF (131 aa)). Ser-105 bears the Phosphoserine mark. 3',5'-cyclic AMP-binding positions include 145–276 (LFSH…EKFP), Glu-223, Arg-232, 277–398 (CCRH…GVEE), Glu-344, and Arg-353.

This sequence belongs to the cAMP-dependent kinase regulatory chain family. As to quaternary structure, tetramer, composed of 2 regulatory (R) and 2 catalytic (C) subunits. In the presence of cAMP it dissociates into 2 active monomeric C subunits and an R dimer.

In terms of biological role, cAMP-dependent protein kinase PKA regulatory subunit. This is cAMP-dependent protein kinase regulatory subunit (PKAR) from Colletotrichum trifolii.